Consider the following 828-residue polypeptide: DNA gyrase subunit A (828 aa).

The 466-residue stretch at 32–497 (LPDVRDGLKP…EVLSLEDEDL (466 aa)) folds into the Topo IIA-type catalytic domain. Tyr-120 (O-(5'-phospho-DNA)-tyrosine intermediate) is an active-site residue. Residues 524–530 (QKRGGRG) carry the GyrA-box motif.

The protein belongs to the type II topoisomerase GyrA/ParC subunit family. As to quaternary structure, heterotetramer, composed of two GyrA and two GyrB chains. In the heterotetramer, GyrA contains the active site tyrosine that forms a transient covalent intermediate with DNA, while GyrB binds cofactors and catalyzes ATP hydrolysis.

The protein resides in the cytoplasm. It catalyses the reaction ATP-dependent breakage, passage and rejoining of double-stranded DNA.. A type II topoisomerase that negatively supercoils closed circular double-stranded (ds) DNA in an ATP-dependent manner to modulate DNA topology and maintain chromosomes in an underwound state. Negative supercoiling favors strand separation, and DNA replication, transcription, recombination and repair, all of which involve strand separation. Also able to catalyze the interconversion of other topological isomers of dsDNA rings, including catenanes and knotted rings. Type II topoisomerases break and join 2 DNA strands simultaneously in an ATP-dependent manner. The polypeptide is DNA gyrase subunit A (Streptococcus pyogenes serotype M3 (strain ATCC BAA-595 / MGAS315)).